The sequence spans 40 residues: Photosystem II reaction center protein Y (40 aa).

A helical transmembrane segment spans residues 5–23 (LIVVLAPILLAGGWAVFNI).

The protein belongs to the PsbY family. In terms of assembly, PSII is composed of 1 copy each of membrane proteins PsbA, PsbB, PsbC, PsbD, PsbE, PsbF, PsbH, PsbI, PsbJ, PsbK, PsbL, PsbM, PsbT, PsbX, PsbY, PsbZ, Psb30/Ycf12, peripheral proteins PsbO, CyanoQ (PsbQ), PsbU, PsbV and a large number of cofactors. It forms dimeric complexes.

The protein localises to the cellular thylakoid membrane. Loosely associated component of the core of photosystem II (PSII), it is not always seen in crystals. PSII is a light-driven water plastoquinone oxidoreductase, using light energy to abstract electrons from H(2)O, generating a proton gradient subsequently used for ATP formation. This is Photosystem II reaction center protein Y from Synechococcus elongatus (strain ATCC 33912 / PCC 7942 / FACHB-805) (Anacystis nidulans R2).